We begin with the raw amino-acid sequence, 287 residues long: Ribosomal RNA small subunit methyltransferase A (287 aa).

Positions 28, 30, 55, 77, 103, and 123 each coordinate S-adenosyl-L-methionine.

It belongs to the class I-like SAM-binding methyltransferase superfamily. rRNA adenine N(6)-methyltransferase family. RsmA subfamily.

The protein localises to the cytoplasm. The enzyme catalyses adenosine(1518)/adenosine(1519) in 16S rRNA + 4 S-adenosyl-L-methionine = N(6)-dimethyladenosine(1518)/N(6)-dimethyladenosine(1519) in 16S rRNA + 4 S-adenosyl-L-homocysteine + 4 H(+). In terms of biological role, specifically dimethylates two adjacent adenosines (A1518 and A1519) in the loop of a conserved hairpin near the 3'-end of 16S rRNA in the 30S particle. May play a critical role in biogenesis of 30S subunits. The chain is Ribosomal RNA small subunit methyltransferase A from Rhodopseudomonas palustris (strain BisA53).